A 239-amino-acid polypeptide reads, in one-letter code: Pimeloyl-[acyl-carrier protein] methyl ester esterase (239 aa).

Residues Trp20, 77–78 (SM), and 138–142 (FISLQ) each bind substrate. Ser77 (nucleophile) is an active-site residue. Catalysis depends on residues Asp192 and His220. Position 220 (His220) interacts with substrate.

This sequence belongs to the AB hydrolase superfamily. Carboxylesterase BioH family. As to quaternary structure, monomer.

It is found in the cytoplasm. It carries out the reaction 6-carboxyhexanoyl-[ACP] methyl ester + H2O = 6-carboxyhexanoyl-[ACP] + methanol + H(+). The protein operates within cofactor biosynthesis; biotin biosynthesis. Functionally, the physiological role of BioH is to remove the methyl group introduced by BioC when the pimeloyl moiety is complete. It allows to synthesize pimeloyl-ACP via the fatty acid synthetic pathway through the hydrolysis of the ester bonds of pimeloyl-ACP esters. The polypeptide is Pimeloyl-[acyl-carrier protein] methyl ester esterase (Legionella pneumophila (strain Paris)).